Consider the following 393-residue polypeptide: Dual specificity mitogen-activated protein kinase kinase 1 (393 aa).

Residues 1–27 form a disordered region; sequence MPKKKPTPIQLNPAPDGSAVNGTSSAE. A Protein kinase domain is found at 68-361; that stretch reads FEKISELGAG…LKQLMVHAFI (294 aa). Residues 74 to 82 and Lys-97 each bind ATP; that span reads LGAGNGGVV. Asp-190 serves as the catalytic Proton acceptor. Residues Ser-218 and Ser-222 each carry the phosphoserine; by RAF modification. The tract at residues 270-307 is RAF1-binding; sequence ELELLFGCHVEGDAAETPPRPRTPGRPLSSYGMDSRPP. Residue Thr-286 is modified to Phosphothreonine. At Thr-292 the chain carries Phosphothreonine; by MAPK1. Ser-298 carries the phosphoserine; by PAK modification.

The protein belongs to the protein kinase superfamily. STE Ser/Thr protein kinase family. MAP kinase kinase subfamily. In terms of assembly, found in a complex with at least BRAF, HRAS, MAP2K1, MAPK3/ERK1 and RGS14. Forms a heterodimer with MAP2K2/MEK2. Forms heterodimers with KSR2 which further dimerize to form tetramers. Interacts with KSR1 or KSR2 and BRAF; the interaction with KSR1 or KSR2 mediates KSR1-BRAF or KSR2-BRAF dimerization. Interacts with ARBB2, LAMTOR3, MAPK1/ERK2 and RAF1. Interacts with MAPK1/ERK2. Interacts with MORG1. Interacts with PPARG. Interacts with SGK1. Interacts with BIRC6/bruce. Interacts with KAT7; the interaction promotes KAT7 phosphorylation. Interacts with RAF1 and NEK10; the interaction is required for ERK1/2-signaling pathway activation in response to UV irradiation. Interacts with TRAF3IP3. Interacts with MOS. In terms of processing, phosphorylation at Ser-218 and Ser-222 by MAP kinase kinase kinases (BRAF or MEKK1) positively regulates kinase activity. Also phosphorylated at Thr-292 by MAPK1/ERK2 and at Ser-298 by PAK. MAPK1/ERK2 phosphorylation of Thr-292 occurs in response to cellular adhesion and leads to inhibition of Ser-298 phosphorylation by PAK. Autophosphorylated at Ser-218 and Ser-222, autophosphosphorylation is promoted by NEK10 following UV irradiation.

It is found in the cytoplasm. The protein localises to the cytoskeleton. It localises to the microtubule organizing center. Its subcellular location is the centrosome. The protein resides in the spindle pole body. It is found in the nucleus. The protein localises to the membrane. The enzyme catalyses L-seryl-[protein] + ATP = O-phospho-L-seryl-[protein] + ADP + H(+). It carries out the reaction L-threonyl-[protein] + ATP = O-phospho-L-threonyl-[protein] + ADP + H(+). The catalysed reaction is L-tyrosyl-[protein] + ATP = O-phospho-L-tyrosyl-[protein] + ADP + H(+). Its activity is regulated as follows. Ras proteins such as HRAS mediate the activation of RAF proteins such as RAF1 or BRAF which in turn activate extracellular signal-regulated kinases (ERK) through MAPK (mitogen-activated protein kinases) and ERK kinases MAP2K1/MEK1 and MAP2K2/MEK2. Activation occurs through phosphorylation of Ser-218 and Ser-222. MAP2K1/MEK1 binds KSR1 or KSR2 releasing the inhibitory intramolecular interaction between KSR1 or KSR2 protein kinase and N-terminal domains. This allows KSR1 or KSR2 dimerization with BRAF leading to BRAF activation and phosphorylation of MAP2K1. MAP2K1/MEK1 is also the target of negative feed-back regulation by its substrate kinases, such as MAPK1/ERK2. These phosphorylate MAP2K1/MEK1 on Thr-292, thereby facilitating dephosphorylation of the activating residues Ser-218 and Ser-222. Inhibited by serine/threonine phosphatase 2A. Functionally, dual specificity protein kinase which acts as an essential component of the MAP kinase signal transduction pathway. Binding of extracellular ligands such as growth factors, cytokines and hormones to their cell-surface receptors activates RAS and this initiates RAF1 activation. RAF1 then further activates the dual-specificity protein kinases MAP2K1/MEK1 and MAP2K2/MEK2. Both MAP2K1/MEK1 and MAP2K2/MEK2 function specifically in the MAPK/ERK cascade, and catalyze the concomitant phosphorylation of a threonine and a tyrosine residue in a Thr-Glu-Tyr sequence located in the extracellular signal-regulated kinases MAPK3/ERK1 and MAPK1/ERK2, leading to their activation and further transduction of the signal within the MAPK/ERK cascade. Activates BRAF in a KSR1 or KSR2-dependent manner; by binding to KSR1 or KSR2 releases the inhibitory intramolecular interaction between KSR1 or KSR2 protein kinase and N-terminal domains which promotes KSR1 or KSR2-BRAF dimerization and BRAF activation. Depending on the cellular context, this pathway mediates diverse biological functions such as cell growth, adhesion, survival and differentiation, predominantly through the regulation of transcription, metabolism and cytoskeletal rearrangements. One target of the MAPK/ERK cascade is peroxisome proliferator-activated receptor gamma (PPARG), a nuclear receptor that promotes differentiation and apoptosis. MAP2K1/MEK1 has been shown to export PPARG from the nucleus. The MAPK/ERK cascade is also involved in the regulation of endosomal dynamics, including lysosome processing and endosome cycling through the perinuclear recycling compartment (PNRC), as well as in the fragmentation of the Golgi apparatus during mitosis. The chain is Dual specificity mitogen-activated protein kinase kinase 1 (Map2k1) from Mus musculus (Mouse).